Here is a 428-residue protein sequence, read N- to C-terminus: MTWFIDRRLNGKNKSTVNRQRFLRRYKAQIKQSISEAINKRSVTDVDSGESVSIPTDDISEPMFHQGRGGLRHRVHPGNDHFIQNDRIERPQGGGGGGSGSGQGQASQDGEGQDEFVFQISKDEYLDLLFEDLALPNLKKNQHRQLNEYKTHRAGFTSNGVPANISVVRSLQNSLARRTAMTAGKRRELHALETELETISHSEPAQLLEEERLRREIAELRAKIERVPFIDTFDLRYKNYEKRPEPSSQAVMFCLMDVSGSMDQATKDMAKRFYILLYLFLSRTYKNVEVVYIRHHTQAKEVDEHEFFYSQETGGTIVSSALKLMDEVVKERYDPGQWNIYAAQASDGDNWADDSPLCHEILAKKLLPVVRYYSYIEITRRAHQTLWREYEHLQATFDNFAMQHIRDQEDIYPVFRELFQKQSANQSA.

The span at 78–90 (GNDHFIQNDRIER) shows a compositional bias: basic and acidic residues. Residues 78-111 (GNDHFIQNDRIERPQGGGGGGSGSGQGQASQDGE) form a disordered region. Positions 92–103 (QGGGGGGSGSGQ) are enriched in gly residues.

Belongs to the UPF0229 family.

The protein is UPF0229 protein YeaH of Salmonella heidelberg (strain SL476).